Consider the following 251-residue polypeptide: Prothoracicostatic peptides (251 aa).

The tract at residues 1–22 (MRKSARGQVCTEAGAGASGDWQ) is disordered. The propeptide occupies 1–77 (MRKSARGQVC…GWQDLNSAWG (77 aa)). At tryptophan 89 the chain carries Tryptophan amide. The propeptide occupies 93-138 (GWNDMSSAWGKRGWNDMSSAWGKRGWNDMSSAWGKRGWNDMSSAWG). Tryptophan 152 carries the post-translational modification Tryptophan amide. Residues 156–187 (AAEPDYEEIDAAIEQLIPIQQLSDNERMEVPE) constitute a propeptide that is removed on maturation. A tryptophan amide mark is found at tryptophan 198 and tryptophan 228. Residues 227–251 (MWGKRSAPDADAVDDDHESSARDEA) are disordered.

In terms of tissue distribution, prothoracicostatic peptide 5: Expressed in antennal lobe (AL), corpora cardiaca (CC), corpora allata (CA) and gnathal ganglion (GNG) (at protein level). Expression in AL detected in all animals, in CC, CA and GNG in most (at protein level). Prothoracicostatic peptide 6: Expressed in antennal lobe (AL), corpora cardiaca (CC), corpora allata (CA) and gnathal ganglion (GNG) (at protein level). Expression in AL detected in all animals, expression in GNG in most animals, in CA and CC detected in some animals (at protein level). Prothoracicostatic peptide 7: Expressed in antennal lobe (AL), corpora cardiaca (CC), corpora allata (CA) and gnathal ganglion (GNG) (at protein level). Expression in AL, CA and CC detected in most animals, expression in GNG in some animals (at protein level). Prothoracicostatic peptide precursor-related peptide 2: Expressed in antennal lobe (AL), corpora cardiaca (CC) and corpora allata (CA) with expression detected in few animals (at protein level). Not expressed in gnathal ganglion (GNG) (at protein level). Prothoracicostatic peptide 8: Expressed in antennal lobe (AL), corpora cardiaca (CC), corpora allata (CA) and gnathal ganglion (GNG) (at protein level). Expression in AL detected in all animals, expression in GNG in most animals, in CA and CC detected in some animals (at protein level). Prothoracicostatic peptide precursor-related peptide 3: Expressed in antennal lobe (AL) in few animals (at protein level). Not expressed in corpora cardiaca (CC), corpora allata (CA) and gnathal ganglion (GNG) (at protein level).

The protein localises to the secreted. In Agrotis ipsilon (Black cutworm moth), this protein is Prothoracicostatic peptides.